The primary structure comprises 202 residues: uncharacterized protein (202 aa).

The region spanning 1–202 (MRGILRMTVL…KGLRSAAEKR (202 aa)) is the START domain.

May play a role in the interaction of the bacterium with animal cells. This is an uncharacterized protein from Pseudomonas aeruginosa (strain ATCC 15692 / DSM 22644 / CIP 104116 / JCM 14847 / LMG 12228 / 1C / PRS 101 / PAO1).